The chain runs to 224 residues: Urease accessory protein UreF (224 aa).

It belongs to the UreF family. UreD, UreF and UreG form a complex that acts as a GTP-hydrolysis-dependent molecular chaperone, activating the urease apoprotein by helping to assemble the nickel containing metallocenter of UreC. The UreE protein probably delivers the nickel.

Its subcellular location is the cytoplasm. Required for maturation of urease via the functional incorporation of the urease nickel metallocenter. The sequence is that of Urease accessory protein UreF from Klebsiella pneumoniae (strain 342).